Consider the following 544-residue polypeptide: Hydroxylamine reductase (544 aa).

Positions 3, 6, 15, and 21 each coordinate [4Fe-4S] cluster. Positions 244, 268, 313, 400, 428, 453, 487, and 489 each coordinate hybrid [4Fe-2O-2S] cluster. Cys400 is subject to Cysteine persulfide.

The protein belongs to the HCP family. The cofactor is [4Fe-4S] cluster. Requires hybrid [4Fe-2O-2S] cluster as cofactor.

The protein resides in the cytoplasm. It catalyses the reaction A + NH4(+) + H2O = hydroxylamine + AH2 + H(+). Functionally, catalyzes the reduction of hydroxylamine to form NH(3) and H(2)O. This is Hydroxylamine reductase from Trichormus variabilis (strain ATCC 29413 / PCC 7937) (Anabaena variabilis).